The sequence spans 481 residues: Aspartyl/glutamyl-tRNA(Asn/Gln) amidotransferase subunit B (481 aa).

This sequence belongs to the GatB/GatE family. GatB subfamily. In terms of assembly, heterotrimer of A, B and C subunits.

The catalysed reaction is L-glutamyl-tRNA(Gln) + L-glutamine + ATP + H2O = L-glutaminyl-tRNA(Gln) + L-glutamate + ADP + phosphate + H(+). It catalyses the reaction L-aspartyl-tRNA(Asn) + L-glutamine + ATP + H2O = L-asparaginyl-tRNA(Asn) + L-glutamate + ADP + phosphate + 2 H(+). In terms of biological role, allows the formation of correctly charged Asn-tRNA(Asn) or Gln-tRNA(Gln) through the transamidation of misacylated Asp-tRNA(Asn) or Glu-tRNA(Gln) in organisms which lack either or both of asparaginyl-tRNA or glutaminyl-tRNA synthetases. The reaction takes place in the presence of glutamine and ATP through an activated phospho-Asp-tRNA(Asn) or phospho-Glu-tRNA(Gln). The chain is Aspartyl/glutamyl-tRNA(Asn/Gln) amidotransferase subunit B from Marinomonas sp. (strain MWYL1).